Reading from the N-terminus, the 101-residue chain is Gastrin (101 aa).

An N-terminal signal peptide occupies residues 1–21; sequence MPRLCVYMLVLVLALATFSEA. Residues 23–101 are disordered; that stretch reads WKPRSQLQDA…FGRRSAEEDQ (79 aa). Residues 25–37 show a composition bias toward polar residues; it reads PRSQLQDASSGPG. Tyr87 carries the post-translational modification Sulfotyrosine. At Phe92 the chain carries Phenylalanine amide. The segment covering 92–101 has biased composition (basic and acidic residues); the sequence is FGRRSAEEDQ. Position 96 is a phosphoserine (Ser96). The propeptide occupies 96–101; it reads SAEEDQ.

It belongs to the gastrin/cholecystokinin family. Post-translationally, sulfation enhances proteolytic processing, and blocks peptide degradation. Levels of sulfation differ between proteolytically-cleaved gastrins and between tissues. As to expression, abundantly expressed in the stomach and duodenum. Low levels in brain, ovary and pancreas.

Its subcellular location is the secreted. Its function is as follows. Gastrin stimulates the stomach mucosa to produce and secrete hydrochloric acid and the pancreas to secrete its digestive enzymes. It also stimulates smooth muscle contraction and increases blood circulation and water secretion in the stomach and intestine. The polypeptide is Gastrin (Gast) (Mus musculus (Mouse)).